We begin with the raw amino-acid sequence, 274 residues long: Elongation factor Ts (274 aa).

The interval 76–79 (TDFV) is involved in Mg(2+) ion dislocation from EF-Tu.

It belongs to the EF-Ts family.

The protein resides in the cytoplasm. Functionally, associates with the EF-Tu.GDP complex and induces the exchange of GDP to GTP. It remains bound to the aminoacyl-tRNA.EF-Tu.GTP complex up to the GTP hydrolysis stage on the ribosome. The sequence is that of Elongation factor Ts from Mycobacterium sp. (strain JLS).